The sequence spans 686 residues: Methionine--tRNA ligase (686 aa).

Residues 15–25 (PYANGPIHLGH) carry the 'HIGH' region motif. Residues Cys-146, Cys-149, Cys-159, and Cys-162 each coordinate Zn(2+). Positions 331–335 (KMSKS) match the 'KMSKS' region motif. Residue Lys-334 participates in ATP binding. One can recognise a tRNA-binding domain in the interval 584–686 (DFAKIDLRVA…AGVKAGSRVM (103 aa)).

The protein belongs to the class-I aminoacyl-tRNA synthetase family. MetG type 1 subfamily. Homodimer. Zn(2+) is required as a cofactor.

Its subcellular location is the cytoplasm. The catalysed reaction is tRNA(Met) + L-methionine + ATP = L-methionyl-tRNA(Met) + AMP + diphosphate. In terms of biological role, is required not only for elongation of protein synthesis but also for the initiation of all mRNA translation through initiator tRNA(fMet) aminoacylation. The sequence is that of Methionine--tRNA ligase from Mannheimia succiniciproducens (strain KCTC 0769BP / MBEL55E).